The following is a 153-amino-acid chain: Insulin-like growth factor 1 (153 aa).

Residues 49–77 are b; it reads GPETLCGAELVDALQFVCGDRGFYFNKPT. Disulfide bonds link Cys54-Cys96, Cys66-Cys109, and Cys95-Cys100. A c region spans residues 78 to 89; that stretch reads GYGSSSRRAPQT. The a stretch occupies residues 90-110; the sequence is GIVDECCFRSCDLRRLEMYCA. The d stretch occupies residues 111-118; it reads PLKPAKSA. Residues 119–153 constitute a propeptide, e peptide; the sequence is RSVRAQRHTDMPKAQKEVHLKNTSRGSSGNKNYRM. Residues 120–153 are disordered; sequence SVRAQRHTDMPKAQKEVHLKNTSRGSSGNKNYRM. Residues 125-138 are compositionally biased toward basic and acidic residues; the sequence is RHTDMPKAQKEVHL. Residues 139 to 153 are compositionally biased toward polar residues; the sequence is KNTSRGSSGNKNYRM.

The protein belongs to the insulin family. As to quaternary structure, forms a ternary complex with IGFR1 and ITGAV:ITGB3. Forms a ternary complex with IGFR1 and ITGA6:ITGB4. Forms a ternary complex with IGFBP3 and ALS.

It localises to the secreted. Its function is as follows. The insulin-like growth factors, isolated from plasma, are structurally and functionally related to insulin but have a much higher growth-promoting activity. May be a physiological regulator of [1-14C]-2-deoxy-D-glucose (2DG) transport and glycogen synthesis in osteoblasts. Stimulates glucose transport in bone-derived osteoblastic (PyMS) cells and is effective at much lower concentrations than insulin, not only regarding glycogen and DNA synthesis but also with regard to enhancing glucose uptake. May play a role in synapse maturation. Ca(2+)-dependent exocytosis of IGF1 is required for sensory perception of smell in the olfactory bulb. Acts as a ligand for IGF1R. Binds to the alpha subunit of IGF1R, leading to the activation of the intrinsic tyrosine kinase activity which autophosphorylates tyrosine residues in the beta subunit thus initiating a cascade of down-stream signaling events leading to activation of the PI3K-AKT/PKB and the Ras-MAPK pathways. Binds to integrins ITGAV:ITGB3 and ITGA6:ITGB4. Its binding to integrins and subsequent ternary complex formation with integrins and IGFR1 are essential for IGF1 signaling. Induces the phosphorylation and activation of IGFR1, MAPK3/ERK1, MAPK1/ERK2 and AKT1. As part of the MAPK/ERK signaling pathway, acts as a negative regulator of apoptosis in cardiomyocytes via promotion of STUB1/CHIP-mediated ubiquitination and degradation of ICER-type isoforms of CREM. This chain is Insulin-like growth factor 1, found in Sus scrofa (Pig).